Here is a 408-residue protein sequence, read N- to C-terminus: Broad specificity amino-acid racemase (408 aa).

The first 24 residues, 1-24, serve as a signal peptide directing secretion; it reads MNFKKTLLSIAIASASLTPAFSYS. A disulfide bridge links Cys71 with Cys97. Lys75 acts as the Proton acceptor in catalysis. At Lys75 the chain carries N6-(pyridoxal phosphate)lysine. Arg174 is a binding site for substrate. Tyr300 acts as the Proton acceptor in catalysis. Substrate is bound at residue Met348.

The protein belongs to the alanine racemase family. Bsr subfamily. Requires pyridoxal 5'-phosphate as cofactor.

The protein localises to the periplasm. It catalyses the reaction an L-alpha-amino acid = a D-alpha-amino acid. The enzyme catalyses L-lysine = D-lysine. It carries out the reaction L-arginine = D-arginine. In terms of biological role, amino-acid racemase able to utilize a broad range of substrates. In Vibrio vulnificus (strain CMCP6), this protein is Broad specificity amino-acid racemase (alr).